The sequence spans 778 residues: uncharacterized protein (778 aa).

One can recognise a PE domain in the interval 1–92 (MSFVIAVPEA…GARSYVVAEA (92 aa)). 3 disordered regions span residues 125–163 (ADGT…AGLI), 372–510 (TGLA…GDAF), and 718–778 (QGGL…GADG). Gly residues-rich tracts occupy residues 402–429 (NQTG…GGLG), 436–510 (DGTG…GDAF), and 718–763 (QGGL…GSSG).

The protein belongs to the mycobacterial PE family. PGRS subfamily.

This is an uncharacterized protein from Mycobacterium bovis (strain ATCC BAA-935 / AF2122/97).